We begin with the raw amino-acid sequence, 344 residues long: 3,4-dihydroxy-2-butanone 4-phosphate synthase (344 aa).

The interval 1-202 (MILRRVTEAL…VSDLISYRLE (202 aa)) is DHBP synthase. Residues 27-28 (RE), aspartate 32, 139-143 (RTGHT), and glutamate 163 each bind D-ribulose 5-phosphate. Glutamate 28 contributes to the Mg(2+) binding site. Position 142 (histidine 142) interacts with Mg(2+). The tract at residues 203–344 (NESLLKMFCQ…GLKLVETISL (142 aa)) is GTP cyclohydrolase II-like.

It in the N-terminal section; belongs to the DHBP synthase family. The protein in the C-terminal section; belongs to the GTP cyclohydrolase II family. Mg(2+) serves as cofactor. Requires Mn(2+) as cofactor.

It carries out the reaction D-ribulose 5-phosphate = (2S)-2-hydroxy-3-oxobutyl phosphate + formate + H(+). It functions in the pathway cofactor biosynthesis; riboflavin biosynthesis; 2-hydroxy-3-oxobutyl phosphate from D-ribulose 5-phosphate: step 1/1. Catalyzes the conversion of D-ribulose 5-phosphate to formate and 3,4-dihydroxy-2-butanone 4-phosphate. The sequence is that of 3,4-dihydroxy-2-butanone 4-phosphate synthase (ribB) from Helicobacter pylori (strain J99 / ATCC 700824) (Campylobacter pylori J99).